The chain runs to 662 residues: ABC transporter G family member 25 (662 aa).

Residues 1-30 (MSAFDGVENQMNGPDSSPRLSQDPREPRSL) form a disordered region. The segment covering 9–20 (NQMNGPDSSPRL) has biased composition (polar residues). N-linked (GlcNAc...) asparagine glycosylation is present at asparagine 56. Residues 69–308 (QKPSDETRST…FESVGFSPAF (240 aa)) enclose the ABC transporter domain. ATP is bound at residue 101–108 (GPSGSGKS). N-linked (GlcNAc...) asparagine glycosylation occurs at asparagine 122. 7 helical membrane passes run 374–394 (VNGG…CILL), 406–426 (FDLL…LMWW), 437–457 (LGLL…NAVF), 489–509 (LSME…MVYL), 522–542 (VLLL…AAIM), 547–567 (ASTI…YYVN), and 629–649 (VIGD…FFGY). An ABC transmembrane type-2 domain is found at 388 to 594 (SQLCILLHRL…CYRLLVAIQY (207 aa)).

It belongs to the ABC transporter superfamily. ABCG family. Eye pigment precursor importer (TC 3.A.1.204) subfamily. Mainly expressed in vascular tissues,predominantly in phloem companion cells, with highest levels in roots and seeds, and lower levels in seedlings, stems, leaves and flowers. Mostly observed in inflorescence meristems relative to cauline leaves and developing siliques. In seeds, mainly expressed in the endosperm and, to a lesser extent, in the embryo.

It is found in the cell membrane. The enzyme catalyses abscisate(in) + ATP + H2O = abscisate(out) + ADP + phosphate + H(+). With respect to regulation, ADP and vanadate (ABC transporters inhibitor) inhibit the ATP-dependent abscisic acid (ABA) uptake. Functionally, high affinity abscisic acid (ABA) transporter that mediates the export of ABA, with a preference for (+)-ABA, through the plasma membrane, especially in vascular tissues (e.g. phloem companion cells), and is involved in the intercellular ABA signaling pathway. Together with ABCG31, export ABA from the endosperm to deliver it to the embryo via ABCG30 and ABCG40-mediated import to suppress radicle extension and subsequent embryonic growth. This is ABC transporter G family member 25 from Arabidopsis thaliana (Mouse-ear cress).